A 539-amino-acid chain; its full sequence is Chaperone Ric-8A (539 aa).

The tract at residues 506 to 539 (PMGVTSDGRLGPLDEAAQKMLQRQESSDLDSDSD) is disordered.

Belongs to the synembryn family.

The protein resides in the cytoplasm. The protein localises to the cell cortex. Its function is as follows. Chaperone that specifically binds and folds nascent G alpha proteins prior to G protein heterotrimer formation, promoting their stability and activity: folds GNAI1, GNAO1, GNA13 and GNAQ. Does not fold G(s) G-alpha proteins GNAS nor GNAL. Also acts as a guanine nucleotide exchange factor (GEF) for G alpha proteins by stimulating exchange of bound GDP for free GTP. This chain is Chaperone Ric-8A (ric8a), found in Xenopus laevis (African clawed frog).